Here is a 150-residue protein sequence, read N- to C-terminus: Endoribonuclease YbeY (150 aa).

3 residues coordinate Zn(2+): H116, H120, and H126.

The protein belongs to the endoribonuclease YbeY family. It depends on Zn(2+) as a cofactor.

The protein localises to the cytoplasm. Functionally, single strand-specific metallo-endoribonuclease involved in late-stage 70S ribosome quality control and in maturation of the 3' terminus of the 16S rRNA. The chain is Endoribonuclease YbeY from Mesomycoplasma hyopneumoniae (strain 232) (Mycoplasma hyopneumoniae).